The following is a 134-amino-acid chain: Ribosome-binding factor A (134 aa).

The protein belongs to the RbfA family. As to quaternary structure, monomer. Binds 30S ribosomal subunits, but not 50S ribosomal subunits or 70S ribosomes.

The protein localises to the cytoplasm. Functionally, one of several proteins that assist in the late maturation steps of the functional core of the 30S ribosomal subunit. Associates with free 30S ribosomal subunits (but not with 30S subunits that are part of 70S ribosomes or polysomes). Required for efficient processing of 16S rRNA. May interact with the 5'-terminal helix region of 16S rRNA. The chain is Ribosome-binding factor A from Rhizobium johnstonii (strain DSM 114642 / LMG 32736 / 3841) (Rhizobium leguminosarum bv. viciae).